We begin with the raw amino-acid sequence, 510 residues long: Alpha-L-arabinofuranosidase B (510 aa).

The N-terminal stretch at 1 to 24 (MTMSRSSRSSVLALALATGSLVAA) is a signal peptide. The interval 25–342 (GPCDIYSSGG…ADIVAAKYAT (318 aa)) is catalytic. Intrachain disulfides connect Cys27-Cys37, Cys87-Cys92, and Cys182-Cys183. N-linked (GlcNAc...) asparagine glycosylation occurs at Asn89. Asp225 provides a ligand contact to substrate. Residue Glu227 is the Nucleophile of the active site. The substrate site is built by Asn228 and Gly303. Asp304 functions as the Proton donor in the catalytic mechanism. Residues 343-510 (TSLISGPALT…VSWVVADGFA (168 aa)) are ABD. A disulfide bond links Cys412 and Cys450. The substrate site is built by His427, Asn429, Phe430, Asp446, His475, Glu477, Leu480, and Asp500.

This sequence belongs to the glycosyl hydrolase 54 family.

The protein localises to the secreted. The enzyme catalyses Hydrolysis of terminal non-reducing alpha-L-arabinofuranoside residues in alpha-L-arabinosides.. Its pathway is glycan metabolism; L-arabinan degradation. Alpha-L-arabinofuranosidase involved in the degradation of arabinoxylan, a major component of plant hemicellulose. Able to hydrolyze 1,5-, 1,3- and 1,2-alpha-linkages not only in L-arabinofuranosyl oligosaccharides, but also in polysaccharides containing terminal non-reducing L-arabinofuranoses in side chains, like L-arabinan, arabinogalactan and arabinoxylan. This chain is Alpha-L-arabinofuranosidase B (abfB), found in Emericella nidulans (strain FGSC A4 / ATCC 38163 / CBS 112.46 / NRRL 194 / M139) (Aspergillus nidulans).